The primary structure comprises 961 residues: MTETTSGPARGSRTKGTKATKGLRIERVHTTPGVHPYDEVVWERRDVVMTNWRDGSVNFEQRGVEFPDFWSVNAVNIVTSKYFRGAVGTPQRETGLKQLIDRIVKTYRKAGEEYKYFASPADAEIFEHELAYALLHQIFSFNSPVWFNVGTPQPQQVSACFILSVDDSMESILDWYKEEGMIFKGGSGAGLNLSRIRSSKELLSSGGNASGPVSFMRGADASAGTIKSGGATRRAAKMVILDVDHPDIEGFIETKVKEEEKIRALRDAGFDMDLGGDDITSVQYQNANNSVRVNDEFMRAVESGSAFGLRARMTGEIIEQVDAKALFRKMAQAAWACADPGIQYDDTINRWHTCPESGRINGSNPCSEYMHLDNTSCNLASLNLMKFLTDDGEGNQSFDVERFAKVVELVITAMDISICFADFPTQKIGENTRAFRQLGIGYANLGALLMATGHAYDSDGGRAIAGAISSLMTGTSYRRSAELAAVVGPYDGYARNAAPHNQVMRQHADANDTAVRMDDLDTPIWAAATETWQDVLRLGEKNGFRNAQASVIAPTGTIGLAMSCDTTGLEPDLALVKFKKLVGGGSMQIVNGTVPQALRRLGYQAEQIEAIVEHIAEHGNVLDAPGLKTEHYKVFDCAMGERSISAMGHVRMMAAIQPWISGALSKTVNMPESATVEEVEEIYFEAWKMGVKALAIYRDNCKVGQPLSAKTKEKEQDGIAEKTEDTIRAAVEKVIEYRPVRKRLPKGRPGITTSFTVGGAEGYMTANSYPDDGLGEVFLKMSKQGSTLAGMMDAFSIAVSVGLQYGVPLETYVSKFTNMRFEPAGMTDDPDVRMAQSIVDNIFRRLALDFLPFETRSALGIHSAEERQRHLDTGSYEQVIEEDELDVEGLAQSAPRQQIPAVPAAPAEIPAPKQAHTSAELVEMQLGISADAPLCFSCGTKMQRAGSCYICEGCGSTSGCS.

The segment at 1-23 (MTETTSGPARGSRTKGTKATKGL) is disordered. Substrate contacts are provided by residues serine 143, 159 to 160 (AC), glycine 188, 364 to 368 (NPCSE), and 554 to 558 (PTGTI). Cysteine 160 and cysteine 377 are joined by a disulfide. The active-site Proton acceptor is the asparagine 364. The Cysteine radical intermediate role is filled by cysteine 366. Glutamate 368 serves as the catalytic Proton acceptor.

Belongs to the ribonucleoside diphosphate reductase class-2 family. In terms of assembly, homotetramer. Adenosylcob(III)alamin serves as cofactor.

It carries out the reaction a 2'-deoxyribonucleoside 5'-diphosphate + [thioredoxin]-disulfide + H2O = a ribonucleoside 5'-diphosphate + [thioredoxin]-dithiol. Catalyzes the reduction of ribonucleotides to deoxyribonucleotides. May function to provide a pool of deoxyribonucleotide precursors for DNA repair during oxygen limitation and/or for immediate growth after restoration of oxygen. In Streptomyces clavuligerus, this protein is Vitamin B12-dependent ribonucleotide reductase (nrdJ).